Reading from the N-terminus, the 359-residue chain is Molybdenum import ATP-binding protein ModC (359 aa).

An ABC transporter domain is found at 1–229 (MLELNFSQQL…SALRPWLQRE (229 aa)). 31 to 38 (GLSGAGKT) is an ATP binding site. One can recognise a Mop domain in the interval 289–354 (SSSIRNILPV…IKSVSFNRQN (66 aa)).

This sequence belongs to the ABC transporter superfamily. Molybdate importer (TC 3.A.1.8) family. In terms of assembly, the complex is composed of two ATP-binding proteins (ModC), two transmembrane proteins (ModB) and a solute-binding protein (ModA).

The protein resides in the cell inner membrane. The enzyme catalyses molybdate(out) + ATP + H2O = molybdate(in) + ADP + phosphate + H(+). Functionally, part of the ABC transporter complex ModABC involved in molybdenum import. Responsible for energy coupling to the transport system. The sequence is that of Molybdenum import ATP-binding protein ModC from Yersinia pseudotuberculosis serotype I (strain IP32953).